Consider the following 274-residue polypeptide: Fatty-acid O-methyltransferase (274 aa).

It belongs to the methyltransferase superfamily.

The enzyme catalyses a fatty acid + S-adenosyl-L-methionine = a fatty acid methyl ester + S-adenosyl-L-homocysteine. Its function is as follows. O-methyltransferase that modifies the hydroxy group of the fatty acids. Oleate is the most effective fatty acid acceptor. The sequence is that of Fatty-acid O-methyltransferase (mtf2) from Mycolicibacterium smegmatis (strain ATCC 700084 / mc(2)155) (Mycobacterium smegmatis).